The following is a 303-amino-acid chain: Uricase (303 aa).

Ala-2 carries the post-translational modification N-acetylalanine. 2 positions are modified to N6-acetyllysine; alternate: Lys-10 and Lys-23. Residues Lys-10 and Lys-23 each carry the N6-succinyllysine; alternate modification. The active-site Charge relay system is Lys-23. 2 positions are modified to N6-acetyllysine: Lys-27 and Lys-36. Phosphoserine occurs at positions 39 and 63. Thr-68 serves as the catalytic Charge relay system. Residues Thr-68 and Asp-69 each coordinate urate. Residues Lys-118, Lys-122, and Lys-164 each carry the N6-acetyllysine modification. Phe-170 is a binding site for urate. An N6-acetyllysine mark is found at Lys-175 and Lys-185. Residue Arg-187 participates in urate binding. Position 220 is an N6-acetyllysine; alternate (Lys-220). N6-succinyllysine; alternate is present on Lys-220. The residue at position 231 (Ser-231) is a Phosphoserine. Urate is bound by residues Val-234, Gln-235, and Asn-261. Catalysis depends on His-263, which acts as the Charge relay system. Residue Lys-277 is modified to N6-acetyllysine. Tyr-288 bears the Phosphotyrosine mark. The Microbody targeting signal motif lies at 301–303 (SRL).

Belongs to the uricase family. Expressed in liver. Not detected in other tissues tested.

It is found in the peroxisome. The catalysed reaction is urate + O2 + H2O = 5-hydroxyisourate + H2O2. It participates in purine metabolism; urate degradation; (S)-allantoin from urate: step 1/3. Its activity is regulated as follows. Competitively inhibited by xanthine. Catalyzes the oxidation of uric acid to 5-hydroxyisourate, which is further processed to form (S)-allantoin. This Rattus norvegicus (Rat) protein is Uricase (Uox).